A 1683-amino-acid polypeptide reads, in one-letter code: Genome polyprotein (1683 aa).

Topologically, residues 1–445 (MRCIGISNRD…LHQVFGAIYG (445 aa)) are extracellular. Intrachain disulfides connect Cys3-Cys30, Cys60-Cys121, Cys74-Cys105, and Cys92-Cys116. The N-linked (GlcNAc...) asparagine; by host glycan is linked to Asn67. A fusion peptide region spans residues 98 to 111 (DRGWGNGCGLFGKG). The N-linked (GlcNAc...) asparagine; by host glycan is linked to Asn153. 2 disulfides stabilise this stretch: Cys185–Cys285 and Cys302–Cys333. Residues 446–466 (AAFSGVSWTMKILIGVIITWI) form a helical membrane-spanning segment. The Cytoplasmic portion of the chain corresponds to 467-472 (GMNSRS). The chain crosses the membrane as a helical span at residues 473-493 (TSLSVSLVLVGIVTLYLGVMV). At 494–915 (QADSGCVVSW…MVGATMTDDI (422 aa)) the chain is on the extracellular side. 6 disulfide bridges follow: Cys499–Cys510, Cys550–Cys638, Cys674–Cys718, Cys775–Cys824, Cys786–Cys808, and Cys807–Cys811. N-linked (GlcNAc...) asparagine; by host glycosylation occurs at Asn702. The helical transmembrane segment at 916–940 (GMGVTYLALLAAFRVRPTFAAGLLL) threads the bilayer. Residues 941-946 (RKLTSK) lie on the Cytoplasmic side of the membrane. Residues 947 to 965 (ELMMTTIGIVLLSQSSIPE) traverse the membrane as a helical segment. Over 966 to 989 (TILELTDALALGMMVLKMVRNMEK) the chain is Lumenal. Residues 990 to 1010 (YQLAVTIMAILCVPNAVILQN) form a helical membrane-spanning segment. Ala1011 is a topological domain (cytoplasmic). The chain crosses the membrane as a helical span at residues 1012–1030 (WKVSCTILAVVSVSPLLLT). Residues 1031-1037 (SSQQKAD) lie on the Lumenal side of the membrane. The helical transmembrane segment at 1038–1058 (WIPLALTIKGLNPTAIFLTTL) threads the bilayer. Topologically, residues 1059-1683 (SRTSKKRAGV…EFKEFAAGRK (625 aa)) are cytoplasmic. Residues 1066 to 1243 (AGVLWDVPSP…EKSIEDNPEI (178 aa)) form the Peptidase S7 domain. Residues His1116, Asp1140, and Ser1200 each act as charge relay system; for serine protease NS3 activity in the active site. The region spanning 1245–1401 (DDIFRKRRLT…QSNAPIMDEE (157 aa)) is the Helicase ATP-binding domain. The important for RNA-binding stretch occupies residues 1249-1252 (RKRR). 1258–1265 (LHPGAGKT) contacts ATP. Positions 1349–1352 (DEAH) match the DEAH box motif. One can recognise a Helicase C-terminal domain in the interval 1411 to 1582 (SGHEWVTDFK…IFEPEREKVD (172 aa)).

As to quaternary structure, capsid protein C: Homodimer. Interacts (via N-terminus) with host EXOC1 (via C-terminus); this interaction results in EXOC1 degradation through the proteasome degradation pathway. Protein prM: Forms heterodimers with envelope protein E in the endoplasmic reticulum and Golgi. In terms of assembly, homodimer; in the endoplasmic reticulum and Golgi. Interacts with protein prM. Interacts with non-structural protein 1. Homodimer; Homohexamer when secreted. Interacts with envelope protein E. As to quaternary structure, interacts (via N-terminus) with serine protease NS3. Non-structural protein 2B: Forms a heterodimer with serine protease NS3. May form homooligomers. In terms of assembly, forms a heterodimer with NS2B. Interacts with NS4B. Interacts with unphosphorylated RNA-directed RNA polymerase NS5; this interaction stimulates RNA-directed RNA polymerase NS5 guanylyltransferase activity. Interacts with host SHFL. In terms of processing, specific enzymatic cleavages in vivo yield mature proteins. Cleavages in the lumen of endoplasmic reticulum are performed by host signal peptidase, wereas cleavages in the cytoplasmic side are performed by the Serine protease NS3. Signal cleavage at the 2K-4B site requires a prior NS3 protease-mediated cleavage at the 4A-2K site. Post-translationally, N-glycosylated. The excreted form is glycosylated and this is required for efficient secretion of the protein from infected cells. N-glycosylated. In terms of processing, specific enzymatic cleavages in vivo yield mature proteins. Cleavages in the lumen of endoplasmic reticulum are performed by host signal peptidase, wereas cleavages in the cytoplasmic side are performed by serine protease NS3. Signal cleavage at the 2K-4B site requires a prior NS3 protease-mediated cleavage at the 4A-2K site.

It is found in the virion membrane. Its subcellular location is the host endoplasmic reticulum membrane. The protein resides in the secreted. It carries out the reaction Selective hydrolysis of -Xaa-Xaa-|-Yaa- bonds in which each of the Xaa can be either Arg or Lys and Yaa can be either Ser or Ala.. It catalyses the reaction a ribonucleoside 5'-triphosphate + H2O = a ribonucleoside 5'-diphosphate + phosphate + H(+). The catalysed reaction is ATP + H2O = ADP + phosphate + H(+). In terms of biological role, binds to host cell surface receptor and mediates fusion between viral and cellular membranes. Envelope protein is synthesized in the endoplasmic reticulum in the form of heterodimer with protein prM. They play a role in virion budding in the ER, and the newly formed immature particle is covered with 60 spikes composed of heterodimer between precursor prM and envelope protein E. The virion is transported to the Golgi apparatus where the low pH causes dissociation of PrM-E heterodimers and formation of E homodimers. prM-E cleavage is inefficient, and many virions are only partially matured. These uncleaved prM would play a role in immune evasion. Involved in immune evasion, pathogenesis and viral replication. Once cleaved off the polyprotein, is targeted to three destinations: the viral replication cycle, the plasma membrane and the extracellular compartment. Essential for viral replication. Required for formation of the replication complex and recruitment of other non-structural proteins to the ER-derived membrane structures. Excreted as a hexameric lipoparticle that plays a role against host immune response. Antagonizing the complement function. Binds to the host macrophages and dendritic cells. Inhibits signal transduction originating from Toll-like receptor 3 (TLR3). Functionally, disrupts the host endothelial glycocalyx layer of host pulmonary microvascular endothelial cells, inducing degradation of sialic acid and shedding of heparan sulfate proteoglycans. NS1 induces expression of sialidases, heparanase, and activates cathepsin L, which activates heparanase via enzymatic cleavage. These effects are probably linked to the endothelial hyperpermeability observed in severe dengue disease. Its function is as follows. Component of the viral RNA replication complex that functions in virion assembly and antagonizes the host immune response. In terms of biological role, serine protease subunit NS2B: Required cofactor for the serine protease function of NS3. May have membrane-destabilizing activity and form viroporins. Displays three enzymatic activities: serine protease, NTPase and RNA helicase. NS3 serine protease, in association with NS2B, performs its autocleavage and cleaves the polyprotein at dibasic sites in the cytoplasm: C-prM, NS2A-NS2B, NS2B-NS3, NS3-NS4A, NS4A-2K and NS4B-NS5. NS3 RNA helicase binds RNA and unwinds dsRNA in the 3' to 5' direction. This chain is Genome polyprotein, found in Aedimorphus (Red guenon).